The primary structure comprises 172 residues: Achaete-scute homolog 4 (172 aa).

Positions 72–124 (AFLRKRNERERQRVRCVNEGYARLRDHLPRELADKRLSKVETLRAAIDYIKHL) constitute a bHLH domain. The interval 144–172 (QRRAECNSDGESKASSAPSPSSEPEEGGS) is disordered. Positions 145-155 (RRAECNSDGES) are enriched in basic and acidic residues. Positions 156–165 (KASSAPSPSS) are enriched in low complexity.

In terms of tissue distribution, expressed in skin. 7-fold higher expression in fetal skin than in adult skin. Weak expression also detected in fetal lung, aorta and brain, and in adult stomach, kidney, ovary and breast.

It localises to the nucleus. Functionally, could be a transcriptional regulator involved in skin development. In Homo sapiens (Human), this protein is Achaete-scute homolog 4 (ASCL4).